A 444-amino-acid chain; its full sequence is Phosphoglucosamine mutase (444 aa).

The Phosphoserine intermediate role is filled by S102. Residues S102, D241, D243, and D245 each contribute to the Mg(2+) site. S102 carries the post-translational modification Phosphoserine.

It belongs to the phosphohexose mutase family. Requires Mg(2+) as cofactor. Activated by phosphorylation.

The enzyme catalyses alpha-D-glucosamine 1-phosphate = D-glucosamine 6-phosphate. Its function is as follows. Catalyzes the conversion of glucosamine-6-phosphate to glucosamine-1-phosphate. The chain is Phosphoglucosamine mutase from Glaesserella parasuis serovar 5 (strain SH0165) (Haemophilus parasuis).